Here is a 405-residue protein sequence, read N- to C-terminus: Probable succinyl-diaminopimelate desuccinylase (405 aa).

His-72 is a Zn(2+) binding site. Residue Asp-74 is part of the active site. Asp-105 contributes to the Zn(2+) binding site. Glu-139 (proton acceptor) is an active-site residue. Glu-140, Glu-165, and His-377 together coordinate Zn(2+).

This sequence belongs to the peptidase M20A family. The cofactor is Zn(2+). Requires Co(2+) as cofactor.

It catalyses the reaction N-succinyl-(2S,6S)-2,6-diaminopimelate + H2O = (2S,6S)-2,6-diaminopimelate + succinate. Its pathway is amino-acid biosynthesis; L-lysine biosynthesis via DAP pathway; LL-2,6-diaminopimelate from (S)-tetrahydrodipicolinate (succinylase route): step 3/3. This chain is Probable succinyl-diaminopimelate desuccinylase (dapE), found in Staphylococcus epidermidis (strain ATCC 35984 / DSM 28319 / BCRC 17069 / CCUG 31568 / BM 3577 / RP62A).